A 119-amino-acid polypeptide reads, in one-letter code: Large ribosomal subunit protein bL20 (119 aa).

Belongs to the bacterial ribosomal protein bL20 family.

Functionally, binds directly to 23S ribosomal RNA and is necessary for the in vitro assembly process of the 50S ribosomal subunit. It is not involved in the protein synthesizing functions of that subunit. This chain is Large ribosomal subunit protein bL20, found in Shewanella sediminis (strain HAW-EB3).